Reading from the N-terminus, the 201-residue chain is Recombination protein RecR (201 aa).

The C4-type zinc finger occupies 60–75; it reads CHECGNVDTSDPCTIC. Residues 83 to 178 form the Toprim domain; the sequence is SILVVVEDVS…KVTKLAHGVP (96 aa).

The protein belongs to the RecR family.

Functionally, may play a role in DNA repair. It seems to be involved in an RecBC-independent recombinational process of DNA repair. It may act with RecF and RecO. The chain is Recombination protein RecR from Methylobacterium nodulans (strain LMG 21967 / CNCM I-2342 / ORS 2060).